The primary structure comprises 624 residues: Iron transport multicopper oxidase FET3 (624 aa).

The signal sequence occupies residues 1 to 20 (MRTFLSSFIILTTFLASLIA). Residues 21 to 555 (AETHTWYFKT…KRLPTGFTTK (535 aa)) lie on the Extracellular side of the membrane. Plastocyanin-like domains are found at residues 46–144 (IGFN…FIIE) and 190–292 (NFLF…LQVN). Residues Asn49 and Asn77 are each glycosylated (N-linked (GlcNAc...) asparagine). Cu cation-binding residues include His81 and His83. An N-linked (GlcNAc...) asparagine glycan is attached at Asn113. Cu cation is bound by residues His126 and His128. N-linked (GlcNAc...) asparagine glycosylation is found at Asn194, Asn198, Asn244, Asn265, Asn292, Asn300, and Asn359. Residues 382-499 (NELIYGTNTN…QGLAVVLIED (118 aa)) enclose the Plastocyanin-like 3 domain. Cu cation is bound by residues His413, His416, and His418. The N-linked (GlcNAc...) asparagine glycan is linked to Asn441. His481, Cys482, His483, and His487 together coordinate Cu cation. The chain crosses the membrane as a helical span at residues 556–576 (GIVALVFSCVAAFLGLFSFSF). Topologically, residues 577–624 (YGMNDIAHVEDKVARDLDIDLEAENEDEEEAVVLNQNSSSSDSNSKPH) are cytoplasmic. Positions 603–624 (DEEEAVVLNQNSSSSDSNSKPH) are disordered. The segment covering 608 to 624 (VVLNQNSSSSDSNSKPH) has biased composition (low complexity).

The protein belongs to the multicopper oxidase family. Cu cation serves as cofactor.

It localises to the cell membrane. In terms of biological role, iron transport multicopper ferroxidase required for Fe(2+) high affinity uptake. Required to oxidize Fe(2+) and release it from the transporter. Essential component of copper-dependent iron transport. This chain is Iron transport multicopper oxidase FET3 (FET3), found in Candida albicans (Yeast).